The chain runs to 837 residues: Ribosome-releasing factor 2, mitochondrial (837 aa).

The N-terminal 29 residues, methionine 1–leucine 29, are a transit peptide targeting the mitochondrion. A tr-type G domain is found at leucine 40 to leucine 331. GTP contacts are provided by residues alanine 49–threonine 56, aspartate 113–histidine 117, and asparagine 167–aspartate 170. Residues isoleucine 338 to serine 359 form a disordered region. Over residues valine 345–serine 355 the composition is skewed to basic residues.

The protein belongs to the TRAFAC class translation factor GTPase superfamily. Classic translation factor GTPase family. EF-G/EF-2 subfamily.

It is found in the mitochondrion. Functionally, mitochondrial GTPase that mediates the disassembly of ribosomes from messenger RNA at the termination of mitochondrial protein biosynthesis. Not involved in the GTP-dependent ribosomal translocation step during translation elongation. This chain is Ribosome-releasing factor 2, mitochondrial, found in Meyerozyma guilliermondii (strain ATCC 6260 / CBS 566 / DSM 6381 / JCM 1539 / NBRC 10279 / NRRL Y-324) (Yeast).